Reading from the N-terminus, the 505-residue chain is ATP synthase subunit alpha (505 aa).

Position 170–177 (170–177) interacts with ATP; sequence GDRQTGKT.

It belongs to the ATPase alpha/beta chains family. F-type ATPases have 2 components, CF(1) - the catalytic core - and CF(0) - the membrane proton channel. CF(1) has five subunits: alpha(3), beta(3), gamma(1), delta(1), epsilon(1). CF(0) has four main subunits: a(1), b(1), b'(1) and c(9-12).

It is found in the cellular thylakoid membrane. It catalyses the reaction ATP + H2O + 4 H(+)(in) = ADP + phosphate + 5 H(+)(out). Functionally, produces ATP from ADP in the presence of a proton gradient across the membrane. The alpha chain is a regulatory subunit. The chain is ATP synthase subunit alpha from Synechococcus sp. (strain ATCC 27144 / PCC 6301 / SAUG 1402/1) (Anacystis nidulans).